A 104-amino-acid polypeptide reads, in one-letter code: Conantokin-P (104 aa).

Residues 1–26 (MQLYTYLYLLVPLVTFHLILSTGTLA) form the signal peptide. Positions 27-80 (HGGTLTERRSTDTTALKPEPVLLQKSDARSTDDNDKDRLTQMKRILKKRGNKAR) are excised as a propeptide. Positions 29–87 (GTLTERRSTDTTALKPEPVLLQKSDARSTDDNDKDRLTQMKRILKKRGNKARGEEEHSK) are disordered. A compositionally biased stretch (basic and acidic residues) spans 52-66 (SDARSTDDNDKDRLT). Glutamate 83, glutamate 84, glutamate 90, glutamate 94, and glutamate 103 each carry 4-carboxyglutamate. 2 residues coordinate a divalent metal cation: glutamate 90 and glutamate 94. The cysteines at positions 91 and 104 are disulfide-linked.

Belongs to the conotoxin B superfamily. Expressed by the venom duct.

It is found in the secreted. Functionally, conantokins inhibit N-methyl-D-aspartate (NMDA) receptors. This toxin has the highest potency for the NR2B/GRIN2B subunit, followed by NR2A/GRIN2A, NR2C/GRIN2C, and NR2D/GRIN2D subunits. In Conus purpurascens (Purple cone), this protein is Conantokin-P.